A 578-amino-acid chain; its full sequence is Thiol:disulfide interchange protein DsbD (578 aa).

A signal peptide spans 1 to 24; the sequence is MAQRFITLILLLCSILLAPHSAQA. Cystine bridges form between Cys134–Cys140 and Cys195–Cys317. 9 helical membrane-spanning segments follow: residues 183 to 203, 219 to 239, 256 to 276, 297 to 317, 318 to 338, 339 to 359, 370 to 390, 397 to 417, and 421 to 441; these read ALLI…YPLI, ILLL…LLGL, YVLI…FGLY, GGSL…CSPC, TTAP…MLAG, GGTL…VTLF, WMQY…VFLL, VWGL…AFIL, and AHSG…LIAA. The Thioredoxin domain maps to 438–578; sequence LIAARPLQDW…FLQHLQNLPR (141 aa). A disulfide bridge links Cys493 with Cys496.

The protein belongs to the thioredoxin family. DsbD subfamily.

Its subcellular location is the cell inner membrane. It catalyses the reaction [protein]-dithiol + NAD(+) = [protein]-disulfide + NADH + H(+). It carries out the reaction [protein]-dithiol + NADP(+) = [protein]-disulfide + NADPH + H(+). Required to facilitate the formation of correct disulfide bonds in some periplasmic proteins and for the assembly of the periplasmic c-type cytochromes. Acts by transferring electrons from cytoplasmic thioredoxin to the periplasm. This transfer involves a cascade of disulfide bond formation and reduction steps. The sequence is that of Thiol:disulfide interchange protein DsbD from Yersinia enterocolitica serotype O:8 / biotype 1B (strain NCTC 13174 / 8081).